Consider the following 237-residue polypeptide: Uridylate kinase (237 aa).

12–15 (KLSG) contributes to the ATP binding site. The tract at residues 20–25 (GEDGLG) is involved in allosteric activation by GTP. G54 serves as a coordination point for UMP. G55 and R59 together coordinate ATP. UMP contacts are provided by residues D74 and 135–142 (TGNPFFTT). ATP is bound by residues T162, Y168, and D171.

Belongs to the UMP kinase family. In terms of assembly, homohexamer.

Its subcellular location is the cytoplasm. It carries out the reaction UMP + ATP = UDP + ADP. Its pathway is pyrimidine metabolism; CTP biosynthesis via de novo pathway; UDP from UMP (UMPK route): step 1/1. Its activity is regulated as follows. Allosterically activated by GTP. Inhibited by UTP. In terms of biological role, catalyzes the reversible phosphorylation of UMP to UDP. This chain is Uridylate kinase, found in Haemophilus influenzae (strain PittEE).